Consider the following 297-residue polypeptide: Glutamyl-Q tRNA(Asp) synthetase (297 aa).

L-glutamate is bound by residues 7–11 (RFAPS) and Glu43. Residues 10 to 20 (PSPTGPLHFGS) carry the 'HIGH' region motif. Cys99, Cys101, Tyr122, and Cys126 together coordinate Zn(2+). Residues Tyr182 and Arg200 each contribute to the L-glutamate site. A 'KMSKS' region motif is present at residues 238–242 (KLSKQ). Position 241 (Lys241) interacts with ATP.

It belongs to the class-I aminoacyl-tRNA synthetase family. GluQ subfamily. Zn(2+) is required as a cofactor.

Functionally, catalyzes the tRNA-independent activation of glutamate in presence of ATP and the subsequent transfer of glutamate onto a tRNA(Asp). Glutamate is transferred on the 2-amino-5-(4,5-dihydroxy-2-cyclopenten-1-yl) moiety of the queuosine in the wobble position of the QUC anticodon. The polypeptide is Glutamyl-Q tRNA(Asp) synthetase (Burkholderia pseudomallei (strain K96243)).